The primary structure comprises 261 residues: CD40 ligand (261 aa).

The Cytoplasmic portion of the chain corresponds to 1-22; it reads MIETYSQPSPRSVAAGPPVSMK. A helical; Signal-anchor for type II membrane protein transmembrane segment spans residues 23–43; that stretch reads IFMYLLTVFLITQMIGSALFA. Topologically, residues 44-240 are extracellular; the sequence is AYLHRRLDKI…LQPGASVFVN (197 aa). The 140-residue stretch at 122–261 folds into the THD domain; it reads IAAHVISEAS…GFTSFGLLKL (140 aa). Cysteines 178 and 218 form a disulfide. Asn240 is a glycosylation site (N-linked (GlcNAc...) asparagine).

The protein belongs to the tumor necrosis factor family. Homotrimer. Interacts with CD28. CD40 ligand, soluble form: Exists as either a monomer or a homotrimer. Forms a ternary complex between CD40 and integrins for CD40-CD40LG signaling. In terms of processing, the soluble form derives from the membrane form by proteolytic processing.

Its subcellular location is the cell membrane. It is found in the cell surface. The protein localises to the secreted. Cytokine that acts as a ligand to CD40/TNFRSF5. Costimulates T-cell proliferation and cytokine production. Its cross-linking on T-cells generates a costimulatory signal which enhances the production of IL4 and IL10 in conjunction with the TCR/CD3 ligation and CD28 costimulation. Induces the activation of NF-kappa-B. Induces the activation of kinases MAPK8 and PAK2 in T-cells. Mediates B-cell proliferation in the absence of co-stimulus as well as IgE production in the presence of IL4. Involved in immunoglobulin class switching. Functionally, acts as a ligand for integrins, specifically ITGA5:ITGB1 and ITGAV:ITGB3; both integrins and the CD40 receptor are required for activation of CD40-CD40LG signaling, which have cell-type dependent effects, such as B-cell activation, NF-kappa-B signaling and anti-apoptotic signaling. In Sus scrofa (Pig), this protein is CD40 ligand (CD40LG).